Consider the following 234-residue polypeptide: Leucyl/phenylalanyl-tRNA--protein transferase (234 aa).

This sequence belongs to the L/F-transferase family.

Its subcellular location is the cytoplasm. It carries out the reaction N-terminal L-lysyl-[protein] + L-leucyl-tRNA(Leu) = N-terminal L-leucyl-L-lysyl-[protein] + tRNA(Leu) + H(+). The catalysed reaction is N-terminal L-arginyl-[protein] + L-leucyl-tRNA(Leu) = N-terminal L-leucyl-L-arginyl-[protein] + tRNA(Leu) + H(+). The enzyme catalyses L-phenylalanyl-tRNA(Phe) + an N-terminal L-alpha-aminoacyl-[protein] = an N-terminal L-phenylalanyl-L-alpha-aminoacyl-[protein] + tRNA(Phe). Its function is as follows. Functions in the N-end rule pathway of protein degradation where it conjugates Leu, Phe and, less efficiently, Met from aminoacyl-tRNAs to the N-termini of proteins containing an N-terminal arginine or lysine. The sequence is that of Leucyl/phenylalanyl-tRNA--protein transferase from Hahella chejuensis (strain KCTC 2396).